Reading from the N-terminus, the 125-residue chain is Probable growth factor FPV211 (125 aa).

A signal peptide spans 1 to 48 (MKEPLIEVKREYNLIKTLTGKKFVVSTSIVVVLLIINMIFYGIRIHEL). The 41-residue stretch at 80 to 120 (LFEKCKSKFNNFCIYGECMNIINLDKKFCICNKGYTGNRCD) folds into the EGF-like domain. 3 disulfide bridges follow: C84–C97, C92–C108, and C110–C119.

The protein resides in the secreted. The sequence is that of Probable growth factor FPV211 from Vertebrata (FPV).